Reading from the N-terminus, the 308-residue chain is Methionyl-tRNA formyltransferase (308 aa).

111-114 (SLLP) contributes to the (6S)-5,6,7,8-tetrahydrofolate binding site.

It belongs to the Fmt family.

The catalysed reaction is L-methionyl-tRNA(fMet) + (6R)-10-formyltetrahydrofolate = N-formyl-L-methionyl-tRNA(fMet) + (6S)-5,6,7,8-tetrahydrofolate + H(+). Attaches a formyl group to the free amino group of methionyl-tRNA(fMet). The formyl group appears to play a dual role in the initiator identity of N-formylmethionyl-tRNA by promoting its recognition by IF2 and preventing the misappropriation of this tRNA by the elongation apparatus. The polypeptide is Methionyl-tRNA formyltransferase (Thermodesulfovibrio yellowstonii (strain ATCC 51303 / DSM 11347 / YP87)).